The primary structure comprises 688 residues: Polyphosphate kinase (688 aa).

Asn45 lines the ATP pocket. Mg(2+) contacts are provided by Arg375 and Arg405. A PLD phosphodiesterase domain is found at 430-464 (PGLKIHAKLFLISRKENGEVVRYAHIGTGNFNEKT). The Phosphohistidine intermediate role is filled by His435. Residues Tyr468, Arg564, and His592 each coordinate ATP.

Belongs to the polyphosphate kinase 1 (PPK1) family. Requires Mg(2+) as cofactor. Post-translationally, an intermediate of this reaction is the autophosphorylated ppk in which a phosphate is covalently linked to a histidine residue through a N-P bond.

It carries out the reaction [phosphate](n) + ATP = [phosphate](n+1) + ADP. In terms of biological role, catalyzes the reversible transfer of the terminal phosphate of ATP to form a long-chain polyphosphate (polyP). The sequence is that of Polyphosphate kinase from Escherichia coli O157:H7.